Consider the following 307-residue polypeptide: Porphobilinogen deaminase (307 aa).

At Cys-241 the chain carries S-(dipyrrolylmethanemethyl)cysteine.

This sequence belongs to the HMBS family. As to quaternary structure, monomer. Requires dipyrromethane as cofactor.

The catalysed reaction is 4 porphobilinogen + H2O = hydroxymethylbilane + 4 NH4(+). It participates in porphyrin-containing compound metabolism; protoporphyrin-IX biosynthesis; coproporphyrinogen-III from 5-aminolevulinate: step 2/4. In terms of biological role, tetrapolymerization of the monopyrrole PBG into the hydroxymethylbilane pre-uroporphyrinogen in several discrete steps. This is Porphobilinogen deaminase from Coxiella burnetii (strain CbuK_Q154) (Coxiella burnetii (strain Q154)).